Reading from the N-terminus, the 304-residue chain is Acetyl-coenzyme A carboxylase carboxyl transferase subunit beta (304 aa).

The CoA carboxyltransferase N-terminal domain maps to 23–292 (VWTKCDSCGQ…PNPEAPREGV (270 aa)). Positions 27, 30, 46, and 49 each coordinate Zn(2+). The segment at 27-49 (CDSCGQVLYRAELERNLEVCPKC) adopts a C4-type zinc-finger fold. The segment at 285–304 (PEAPREGVVVPPVPDQEPEA) is disordered. A compositionally biased stretch (pro residues) spans 295–304 (PPVPDQEPEA).

The protein belongs to the AccD/PCCB family. In terms of assembly, acetyl-CoA carboxylase is a heterohexamer composed of biotin carboxyl carrier protein (AccB), biotin carboxylase (AccC) and two subunits each of ACCase subunit alpha (AccA) and ACCase subunit beta (AccD). Zn(2+) is required as a cofactor.

The protein localises to the cytoplasm. The catalysed reaction is N(6)-carboxybiotinyl-L-lysyl-[protein] + acetyl-CoA = N(6)-biotinyl-L-lysyl-[protein] + malonyl-CoA. Its pathway is lipid metabolism; malonyl-CoA biosynthesis; malonyl-CoA from acetyl-CoA: step 1/1. Its function is as follows. Component of the acetyl coenzyme A carboxylase (ACC) complex. Biotin carboxylase (BC) catalyzes the carboxylation of biotin on its carrier protein (BCCP) and then the CO(2) group is transferred by the transcarboxylase to acetyl-CoA to form malonyl-CoA. This is Acetyl-coenzyme A carboxylase carboxyl transferase subunit beta from Escherichia coli O6:H1 (strain CFT073 / ATCC 700928 / UPEC).